We begin with the raw amino-acid sequence, 274 residues long: Cytochrome c oxidase subunit 3 (274 aa).

Topologically, residues Met-1–Pro-15 are mitochondrial matrix. A helical membrane pass occupies residues Trp-16–Trp-34. Over Phe-35–Ser-40 the chain is Mitochondrial intermembrane. The chain crosses the membrane as a helical span at residues Met-41–Thr-66. The Mitochondrial matrix portion of the chain corresponds to Phe-67–Thr-72. Residues Ser-73 to Ser-105 form a helical membrane-spanning segment. Topologically, residues Leu-106 to Glu-128 are mitochondrial intermembrane. The chain crosses the membrane as a helical span at residues Val-129–Met-152. The Mitochondrial matrix portion of the chain corresponds to Glu-153–Asn-155. The chain crosses the membrane as a helical span at residues Arg-156–Glu-183. Over Thr-184–Asp-190 the chain is Mitochondrial intermembrane. A helical transmembrane segment spans residues Gly-191–Leu-223. The Mitochondrial matrix portion of the chain corresponds to Ser-224–His-232. The chain crosses the membrane as a helical span at residues Phe-233–Ile-256. The Mitochondrial intermembrane segment spans residues Tyr-257–Asn-274.

It belongs to the cytochrome c oxidase subunit 3 family. Component of the cytochrome c oxidase (complex IV, CIV), a multisubunit enzyme composed of 14 subunits. The complex is composed of a catalytic core of 3 subunits MT-CO1, MT-CO2 and MT-CO3, encoded in the mitochondrial DNA, and 11 supernumerary subunits COX4I, COX5A, COX5B, COX6A, COX6B, COX6C, COX7A, COX7B, COX7C, COX8 and NDUFA4, which are encoded in the nuclear genome. The complex exists as a monomer or a dimer and forms supercomplexes (SCs) in the inner mitochondrial membrane with NADH-ubiquinone oxidoreductase (complex I, CI) and ubiquinol-cytochrome c oxidoreductase (cytochrome b-c1 complex, complex III, CIII), resulting in different assemblies (supercomplex SCI(1)III(2)IV(1) and megacomplex MCI(2)III(2)IV(2)).

It is found in the mitochondrion inner membrane. It catalyses the reaction 4 Fe(II)-[cytochrome c] + O2 + 8 H(+)(in) = 4 Fe(III)-[cytochrome c] + 2 H2O + 4 H(+)(out). Its function is as follows. Component of the cytochrome c oxidase, the last enzyme in the mitochondrial electron transport chain which drives oxidative phosphorylation. The respiratory chain contains 3 multisubunit complexes succinate dehydrogenase (complex II, CII), ubiquinol-cytochrome c oxidoreductase (cytochrome b-c1 complex, complex III, CIII) and cytochrome c oxidase (complex IV, CIV), that cooperate to transfer electrons derived from NADH and succinate to molecular oxygen, creating an electrochemical gradient over the inner membrane that drives transmembrane transport and the ATP synthase. Cytochrome c oxidase is the component of the respiratory chain that catalyzes the reduction of oxygen to water. Electrons originating from reduced cytochrome c in the intermembrane space (IMS) are transferred via the dinuclear copper A center (CU(A)) of subunit 2 and heme A of subunit 1 to the active site in subunit 1, a binuclear center (BNC) formed by heme A3 and copper B (CU(B)). The BNC reduces molecular oxygen to 2 water molecules using 4 electrons from cytochrome c in the IMS and 4 protons from the mitochondrial matrix. The polypeptide is Cytochrome c oxidase subunit 3 (MT-CO3) (Lemur catta (Ring-tailed lemur)).